Here is a 123-residue protein sequence, read N- to C-terminus: cAMP-responsive element-binding protein-like 2 (123 aa).

The tract at residues 1–24 is disordered; the sequence is MDDSKVVGGKVKKPGKRGRKPAKI. Basic residues predominate over residues 10–21; the sequence is KVKKPGKRGRKP. A bZIP domain is found at 23–86; sequence KIDLKAKLER…MAMDQGKIPS (64 aa). Residues 29 to 60 are basic motif; sequence KLERSRQSARECRARKKLRYQYLEELVSSRER. A leucine-zipper region spans residues 62-69; sequence ICALREEL. Residues 92–123 are disordered; it reads LTGEEQSKPQQNSSRHPKAGKTDANTNSLVGN. The span at 114–123 shows a compositional bias: polar residues; that stretch reads DANTNSLVGN.

Belongs to the bZIP family. ATF subfamily. Interacts with CREB1; regulates CREB1 phosphorylation, stability and transcriptional activity. Post-translationally, phosphorylated by AMPK. In terms of tissue distribution, widely expressed with higher expression in adipose tissue, skeletal muscle, and liver (at protein level).

The protein localises to the nucleus. Probable regulator of CREB1 transcriptional activity which is involved in adipose cells differentiation. May also play a regulatory role in the cell cycle. The polypeptide is cAMP-responsive element-binding protein-like 2 (Crebl2) (Mus musculus (Mouse)).